Reading from the N-terminus, the 192-residue chain is Anthranilate synthase component 2 (192 aa).

The Glutamine amidotransferase type-1 domain maps to 3 to 192 (NILLLDNIDS…LQRVIQWTKI (190 aa)). 57 to 59 (GPG) contributes to the L-glutamine binding site. Cys84 acts as the Nucleophile; for GATase activity in catalysis. L-glutamine contacts are provided by residues Gln88 and 134 to 135 (SL). Active-site for GATase activity residues include His170 and Glu172.

In terms of assembly, heterotetramer consisting of two non-identical subunits: a beta subunit (TrpG) and a large alpha subunit (TrpE).

It catalyses the reaction chorismate + L-glutamine = anthranilate + pyruvate + L-glutamate + H(+). Its pathway is amino-acid biosynthesis; L-tryptophan biosynthesis; L-tryptophan from chorismate: step 1/5. Functionally, part of a heterotetrameric complex that catalyzes the two-step biosynthesis of anthranilate, an intermediate in the biosynthesis of L-tryptophan. In the first step, the glutamine-binding beta subunit (TrpG) of anthranilate synthase (AS) provides the glutamine amidotransferase activity which generates ammonia as a substrate that, along with chorismate, is used in the second step, catalyzed by the large alpha subunit of AS (TrpE) to produce anthranilate. In the absence of TrpG, TrpE can synthesize anthranilate directly from chorismate and high concentrations of ammonia. This chain is Anthranilate synthase component 2 (trpG), found in Buchnera aphidicola subsp. Baizongia pistaciae (strain Bp).